The primary structure comprises 229 residues: Probable transmembrane reductase CYB561D1 (229 aa).

At Met1 to Arg24 the chain is on the cytoplasmic side. The 203-residue stretch at Leu22 to Arg224 folds into the Cytochrome b561 domain. The helical transmembrane segment at Gly25–Ser45 threads the bilayer. Over Arg46–Ser53 the chain is Lumenal. Residues Trp54 to Phe74 traverse the membrane as a helical segment. A heme b-binding site is contributed by His55. Topologically, residues Ser75 to Arg91 are cytoplasmic. A helical membrane pass occupies residues Leu92 to Ile112. Heme b contacts are provided by His93 and His127. Over Ser113–Ser128 the chain is Lumenal. The helical transmembrane segment at Trp129 to Leu149 threads the bilayer. Over Cys150 to Cys169 the chain is Cytoplasmic. Residue His166 coordinates heme b. Residues Gly170–Phe190 form a helical membrane-spanning segment. Residues Gln191–Gln193 lie on the Lumenal side of the membrane. The chain crosses the membrane as a helical span at residues Ile194 to Met214. Residues His215 to Ile229 lie on the Cytoplasmic side of the membrane.

The cofactor is heme b.

Its subcellular location is the membrane. It catalyses the reaction monodehydro-L-ascorbate radical(out) + L-ascorbate(in) = monodehydro-L-ascorbate radical(in) + L-ascorbate(out). The catalysed reaction is Fe(3+)(out) + L-ascorbate(in) = monodehydro-L-ascorbate radical(in) + Fe(2+)(out) + H(+). Its function is as follows. Probable transmembrane reductase that may use ascorbate as an electron donor and transfer electrons across membranes to reduce monodehydro-L-ascorbate radical and iron cations Fe(3+) in another cellular compartment. This chain is Probable transmembrane reductase CYB561D1, found in Mus musculus (Mouse).